Consider the following 346-residue polypeptide: UDP-3-O-acylglucosamine N-acyltransferase (346 aa).

Catalysis depends on H240, which acts as the Proton acceptor.

Belongs to the transferase hexapeptide repeat family. LpxD subfamily. Homotrimer.

The catalysed reaction is a UDP-3-O-[(3R)-3-hydroxyacyl]-alpha-D-glucosamine + a (3R)-hydroxyacyl-[ACP] = a UDP-2-N,3-O-bis[(3R)-3-hydroxyacyl]-alpha-D-glucosamine + holo-[ACP] + H(+). Its pathway is bacterial outer membrane biogenesis; LPS lipid A biosynthesis. Catalyzes the N-acylation of UDP-3-O-acylglucosamine using 3-hydroxyacyl-ACP as the acyl donor. Is involved in the biosynthesis of lipid A, a phosphorylated glycolipid that anchors the lipopolysaccharide to the outer membrane of the cell. In Bacteroides fragilis (strain ATCC 25285 / DSM 2151 / CCUG 4856 / JCM 11019 / LMG 10263 / NCTC 9343 / Onslow / VPI 2553 / EN-2), this protein is UDP-3-O-acylglucosamine N-acyltransferase.